The chain runs to 455 residues: EP1-like glycoprotein 2 (455 aa).

The N-terminal stretch at 1–22 (MSRFAILVTLALAIATVSVVIA) is a signal peptide. The Bulb-type lectin domain maps to 44–163 (EYDASYRFIE…NGKFVWQSFD (120 aa)). Residues N56, N106, N191, N211, N241, and N289 are each glycosylated (N-linked (GlcNAc...) asparagine). At C374 the chain carries S-nitrosocysteine. Residues 374–455 (CSGVKGKTVN…NTSSVAYIKY (82 aa)) enclose the PAN domain. 2 disulfide bridges follow: C410/C432 and C414/C420. N-linked (GlcNAc...) asparagine glycosylation occurs at N446.

It localises to the secreted. It is found in the cell wall. This chain is EP1-like glycoprotein 2, found in Arabidopsis thaliana (Mouse-ear cress).